We begin with the raw amino-acid sequence, 491 residues long: Probable CtpA-like serine protease (491 aa).

The disordered stretch occupies residues 1–22; it reads MSESKDTTEVNQEVNEKASSQS. Over residues 9–22 the composition is skewed to polar residues; it reads EVNQEVNEKASSQS. A helical membrane pass occupies residues 34 to 54; it reads FIIILIVTILVTAMIAVFATI. Residues 119 to 201 form the PDZ domain; it reads TKSFNEDVSG…TKVTLTIERG (83 aa). Active-site charge relay system residues include serine 324, aspartate 335, and lysine 349.

This sequence belongs to the peptidase S41A family.

It localises to the cell membrane. This chain is Probable CtpA-like serine protease, found in Staphylococcus saprophyticus subsp. saprophyticus (strain ATCC 15305 / DSM 20229 / NCIMB 8711 / NCTC 7292 / S-41).